The sequence spans 391 residues: Septation protein etd1 (391 aa).

The interval 49 to 68 is disordered; that stretch reads MKSYGSDITPRRPKQLGLPK.

In terms of biological role, involved in septation. The polypeptide is Septation protein etd1 (etd1) (Schizosaccharomyces pombe (strain 972 / ATCC 24843) (Fission yeast)).